A 391-amino-acid chain; its full sequence is Homocitrate synthase AksA (391 aa).

A Pyruvate carboxyltransferase domain is found at 20–271; the sequence is ITIYDTTLRD…DLGFNIGVLY (252 aa).

This sequence belongs to the alpha-IPM synthase/homocitrate synthase family.

The catalysed reaction is acetyl-CoA + 2-oxoglutarate + H2O = (2R)-homocitrate + CoA + H(+). It carries out the reaction 2-oxoadipate + acetyl-CoA + H2O = (R)-dihomocitrate + CoA + H(+). The enzyme catalyses 2-oxoheptanedioate + acetyl-CoA + H2O = (R)-trihomocitrate + CoA + H(+). It participates in organic acid metabolism; 2-oxosuberate biosynthesis. In terms of biological role, catalyzes the condensation of alpha-ketoglutarate and acetyl-CoA to form (R)-homocitrate. Can also catalyze the condensation of alpha-ketoadipate with acetyl-CoA to form (R)-homo(2)citrate, and the condensation of alpha-ketopimelate with acetyl-CoA to form (R)-homo(3)citrate. These reactions are part of the biosynthesis pathway of coenzyme B and biotin. The chain is Homocitrate synthase AksA (aksA) from Methanothermobacter thermautotrophicus (strain ATCC 29096 / DSM 1053 / JCM 10044 / NBRC 100330 / Delta H) (Methanobacterium thermoautotrophicum).